Consider the following 1021-residue polypeptide: Ephrin type-B receptor 6 (1021 aa).

Residues 1 to 31 (MATEGAAQLGNRVAGMVCSLWVLLLVSSVLA) form the signal peptide. Residues 32–594 (LEEVLLDTTG…LSSQLPERLS (563 aa)) lie on the Extracellular side of the membrane. Residues 33–237 (EEVLLDTTGE…FSYTCPAVLR (205 aa)) enclose the Eph LBD domain. The interval 163-182 (SFPSSSSSSSSSSSAAWAVG) is disordered. Low complexity predominate over residues 166-176 (SSSSSSSSSSS). Fibronectin type-III domains lie at 369 to 486 (PPSA…TSHE) and 487 to 582 (VPSA…TLPQ). Asn-480 carries N-linked (GlcNAc...) asparagine glycosylation. The chain crosses the membrane as a helical span at residues 595 to 615 (LVIGSILGALAFLLLAAITVL). Residues 616-1021 (AVVFQRKRRG…HLRQQGSVEV (406 aa)) are Cytoplasmic-facing. The Protein kinase domain maps to 670–919 (IKIEEVIGTG…QLVAAFDKMI (250 aa)). 676-684 (IGTGSFGEV) provides a ligand contact to ATP. Residues 948 to 1012 (PCLDSPQAWL…LHHIQLLQQH (65 aa)) enclose the SAM domain. The short motif at 1019-1021 (VEV) is the PDZ-binding element.

The protein belongs to the protein kinase superfamily. Tyr protein kinase family. Ephrin receptor subfamily. In terms of assembly, interacts with CBL and EPHB1. Interacts with FYN; this interaction takes place in a ligand-independent manner. Post-translationally, ligand-binding increases phosphorylation on tyrosine residues. Phosphorylation on tyrosine residues is mediated by transphosphorylation by the catalytically active EPHB1 in a ligand-independent manner. Tyrosine phosphorylation of the receptor may act as a switch on the functional transition from cell adhesion/attraction to de-adhesion/repulsion. In terms of tissue distribution, expressed in brain. Expressed in non invasive breast carcinoma cell lines (at protein level). Strong expression in brain and pancreas, and weak expression in other tissues, such as heart, placenta, lung, liver, skeletal muscle and kidney. Expressed in breast non invasive tumors but not in metastatic lesions. Isoform 3 is expressed in cell lines of glioblastomas, anaplastic astrocytomas, gliosarcomas and astrocytomas. Isoform 3 is not detected in normal tissues.

It localises to the membrane. The protein localises to the secreted. Kinase-defective receptor for members of the ephrin-B family. Binds to ephrin-B1 and ephrin-B2. Modulates cell adhesion and migration by exerting both positive and negative effects upon stimulation with ephrin-B2. Inhibits JNK activation, T-cell receptor-induced IL-2 secretion and CD25 expression upon stimulation with ephrin-B2. The polypeptide is Ephrin type-B receptor 6 (EPHB6) (Homo sapiens (Human)).